The chain runs to 319 residues: Ribonucleoside-diphosphate reductase small chain (319 aa).

The Fe cation site is built by Asp70, Glu101, and His104. The active site involves Tyr108. The Fe cation site is built by Glu163, Glu197, and His200. The interval Phe313 to Phe319 is interaction with R1.

The protein belongs to the ribonucleoside diphosphate reductase small chain family. Interacts with RNR1/OPG080 subunit. Can interact with host RNR1 supunit. Fe cation serves as cofactor.

It carries out the reaction a 2'-deoxyribonucleoside 5'-diphosphate + [thioredoxin]-disulfide + H2O = a ribonucleoside 5'-diphosphate + [thioredoxin]-dithiol. Functionally, ribonucleoside-diphosphate reductase holoenzyme provides the precursors necessary for viral DNA synthesis. Allows virus growth in non-dividing cells. Catalyzes the biosynthesis of deoxyribonucleotides from the corresponding ribonucleotides. This Bos taurus (Bovine) protein is Ribonucleoside-diphosphate reductase small chain (OPG048).